Reading from the N-terminus, the 135-residue chain is Putative pre-16S rRNA nuclease (135 aa).

This sequence belongs to the YqgF nuclease family.

It localises to the cytoplasm. In terms of biological role, could be a nuclease involved in processing of the 5'-end of pre-16S rRNA. This Maridesulfovibrio salexigens (strain ATCC 14822 / DSM 2638 / NCIMB 8403 / VKM B-1763) (Desulfovibrio salexigens) protein is Putative pre-16S rRNA nuclease.